Here is a 141-residue protein sequence, read N- to C-terminus: Large ribosomal subunit protein uL11 (141 aa).

The protein belongs to the universal ribosomal protein uL11 family. In terms of assembly, part of the ribosomal stalk of the 50S ribosomal subunit. Interacts with L10 and the large rRNA to form the base of the stalk. L10 forms an elongated spine to which L12 dimers bind in a sequential fashion forming a multimeric L10(L12)X complex. One or more lysine residues are methylated.

Its function is as follows. Forms part of the ribosomal stalk which helps the ribosome interact with GTP-bound translation factors. The sequence is that of Large ribosomal subunit protein uL11 from Lactobacillus acidophilus (strain ATCC 700396 / NCK56 / N2 / NCFM).